A 176-amino-acid polypeptide reads, in one-letter code: Nudix hydrolase 18, mitochondrial (176 aa).

Residues 1-21 (MVCLVSRTGRQSQRYNKGRRQ) constitute a mitochondrion transit peptide. Residues 22–153 (VVGCIPYRLK…WMKEALDVLV (132 aa)) form the Nudix hydrolase domain. A Nudix box motif is present at residues 60 to 81 (GGWELDESVEEAASRESLEEAG). Mg(2+) contacts are provided by Glu75 and Glu79.

This sequence belongs to the Nudix hydrolase family. It depends on Mg(2+) as a cofactor. Mn(2+) is required as a cofactor. As to expression, expressed in roots, stems and inflorescences.

It is found in the mitochondrion. Its function is as follows. Probably mediates the hydrolysis of some nucleoside diphosphate derivatives. This chain is Nudix hydrolase 18, mitochondrial (NUDT18), found in Arabidopsis thaliana (Mouse-ear cress).